We begin with the raw amino-acid sequence, 220 residues long: 26S proteasome non-ATPase regulatory subunit 9 (220 aa).

2 coiled-coil regions span residues G4 to L32 and R61 to E91. A PDZ domain is found at R102–T200.

Belongs to the proteasome subunit p27 family. Interacts with PI31; this interaction is increased by PI31 ADP-ribosylation. Interacts with Rpt5.

Functionally, acts as a chaperone during the assembly of the 26S proteasome, specifically of the base subcomplex of the PA700/19S regulatory complex (RC). The chain is 26S proteasome non-ATPase regulatory subunit 9 from Drosophila melanogaster (Fruit fly).